Here is a 329-residue protein sequence, read N- to C-terminus: 4-diphosphocytidyl-2-C-methyl-D-erythritol kinase (329 aa).

Residue Lys14 is part of the active site. 117-127 (PSGAGMGGASS) provides a ligand contact to ATP. The active site involves Asp166.

The protein belongs to the GHMP kinase family. IspE subfamily.

It carries out the reaction 4-CDP-2-C-methyl-D-erythritol + ATP = 4-CDP-2-C-methyl-D-erythritol 2-phosphate + ADP + H(+). The protein operates within isoprenoid biosynthesis; isopentenyl diphosphate biosynthesis via DXP pathway; isopentenyl diphosphate from 1-deoxy-D-xylulose 5-phosphate: step 3/6. Functionally, catalyzes the phosphorylation of the position 2 hydroxy group of 4-diphosphocytidyl-2C-methyl-D-erythritol. The sequence is that of 4-diphosphocytidyl-2-C-methyl-D-erythritol kinase from Rhodopirellula baltica (strain DSM 10527 / NCIMB 13988 / SH1).